The chain runs to 271 residues: Putative carboxymethylenebutenolidase (271 aa).

Catalysis depends on residues Cys147, Asp204, and His236.

This sequence belongs to the dienelactone hydrolase family.

The enzyme catalyses 2-(5-oxo-2,5-dihydrofuran-2-ylidene)acetate + H2O = 4-oxohex-2-enedioate + H(+). In Escherichia coli (strain K12), this protein is Putative carboxymethylenebutenolidase (ysgA).